Consider the following 38-residue polypeptide: Phi-Lf prophage-derived putative minor coat protein (38 aa).

The sequence is that of Phi-Lf prophage-derived putative minor coat protein (gIX-1) from Xanthomonas campestris pv. campestris (strain ATCC 33913 / DSM 3586 / NCPPB 528 / LMG 568 / P 25).